Consider the following 279-residue polypeptide: Odontogenic ameloblast-associated protein (279 aa).

An N-terminal signal peptide occupies residues 1–15 (MKIIILLGFLGATLS). A compositionally biased stretch (low complexity) spans 100 to 123 (AQGAQAGQVDPSQAQTPPQTQPGP). The segment at 100-125 (AQGAQAGQVDPSQAQTPPQTQPGPNH) is disordered. O-linked (GalNAc...) threonine glycans are attached at residues Thr-115 and Thr-119. An interaction with ARHGEF5 region spans residues 127 to 129 (MPY). Residues Thr-168, Thr-244, Thr-250, Thr-251, Thr-255, and Thr-273 are each glycosylated (O-linked (GalNAc...) threonine).

It belongs to the ODAM family. Interacts (via C-terminus) with ARHGEF5. O-glycosylated.

Its subcellular location is the secreted. The protein resides in the cytoplasm. It is found in the nucleus. Tooth-associated epithelia protein that probably plays a role in odontogenesis, the complex process that results in the initiation and generation of the tooth. May be incorporated in the enamel matrix at the end of mineralization process. Involved in the induction of RHOA activity via interaction with ARHGEF and expression of downstream factors such as ROCK. Plays a role in attachment of the junctional epithelium to the tooth surface. This chain is Odontogenic ameloblast-associated protein (ODAM), found in Macaca mulatta (Rhesus macaque).